A 782-amino-acid chain; its full sequence is Endonuclease MutS2 (782 aa).

336–343 (GPNTGGKT) serves as a coordination point for ATP. The Smr domain maps to 707–782 (LDLRGYRYED…GFGVTVATLK (76 aa)).

It belongs to the DNA mismatch repair MutS family. MutS2 subfamily. In terms of assembly, homodimer. Binds to stalled ribosomes, contacting rRNA.

Functionally, endonuclease that is involved in the suppression of homologous recombination and thus may have a key role in the control of bacterial genetic diversity. Acts as a ribosome collision sensor, splitting the ribosome into its 2 subunits. Detects stalled/collided 70S ribosomes which it binds and splits by an ATP-hydrolysis driven conformational change. Acts upstream of the ribosome quality control system (RQC), a ribosome-associated complex that mediates the extraction of incompletely synthesized nascent chains from stalled ribosomes and their subsequent degradation. Probably generates substrates for RQC. This Staphylococcus aureus (strain JH1) protein is Endonuclease MutS2.